Consider the following 283-residue polypeptide: ATP synthase gamma chain (283 aa).

The protein belongs to the ATPase gamma chain family. As to quaternary structure, F-type ATPases have 2 components, CF(1) - the catalytic core - and CF(0) - the membrane proton channel. CF(1) has five subunits: alpha(3), beta(3), gamma(1), delta(1), epsilon(1). CF(0) has three main subunits: a, b and c.

Its subcellular location is the cell inner membrane. Its function is as follows. Produces ATP from ADP in the presence of a proton gradient across the membrane. The gamma chain is believed to be important in regulating ATPase activity and the flow of protons through the CF(0) complex. This is ATP synthase gamma chain from Ehrlichia ruminantium (strain Gardel).